The following is a 568-amino-acid chain: Vacuolar protein 8 (568 aa).

Gly2 is lipidated: N-myristoyl glycine. S-palmitoyl cysteine attachment occurs at residues Cys4, Cys5, and Cys7. ARM repeat units follow at residues 37-74, 75-114, 116-155, 157-196, 198-237, 241-280, 282-321, 323-363, and 407-446; these read DKDN…FAEI, TEKY…NLAV, NENK…NLAT, DDNK…NMTH, GENR…NIAV, NRRK…NLAS, TGYQ…NISI, PLNE…NLAA, and DNSK…NLCS.

Belongs to the beta-catenin family.

The protein localises to the vacuole membrane. In terms of biological role, functions in both vacuole inheritance and protein targeting from the cytoplasm to vacuole. The sequence is that of Vacuolar protein 8 (VAC8) from Eremothecium gossypii (strain ATCC 10895 / CBS 109.51 / FGSC 9923 / NRRL Y-1056) (Yeast).